Reading from the N-terminus, the 202-residue chain is Superoxide dismutase [Cu-Zn], chloroplastic (202 aa).

The transit peptide at 1–48 (MASQTLVSPSPLSSHSLLRTSFSGVSVKLAPQFSTLATSNFKPLTVVA) directs the protein to the chloroplast. 3 residues coordinate Cu cation: His-94, His-96, and His-111. An intrachain disulfide couples Cys-105 to Cys-194. Zn(2+) is bound by residues His-111, His-119, His-128, and Asp-131. Residue His-168 coordinates Cu cation.

Belongs to the Cu-Zn superoxide dismutase family. In terms of assembly, homotetramer. It depends on Cu cation as a cofactor. Zn(2+) is required as a cofactor.

The protein localises to the plastid. It localises to the chloroplast. The enzyme catalyses 2 superoxide + 2 H(+) = H2O2 + O2. Functionally, destroys radicals which are normally produced within the cells and which are toxic to biological systems. The polypeptide is Superoxide dismutase [Cu-Zn], chloroplastic (SODCP) (Pisum sativum (Garden pea)).